The sequence spans 385 residues: Cytochrome b (385 aa).

The next 4 membrane-spanning stretches (helical) occupy residues 32–52 (FGAL…FLAM), 76–98 (WLIR…IHVF), 113–133 (LWNL…LGYV), and 179–199 (FFSL…IHVA). Heme b contacts are provided by histidine 82 and histidine 96. Residues histidine 183 and histidine 197 each coordinate heme b. Histidine 202 is an a ubiquinone binding site. 4 helical membrane passes run 226-246 (FIFK…YAVF), 290-310 (LGGV…PFIT), 322-342 (SKTI…WIGF), and 349-369 (YLML…SLAV).

This sequence belongs to the cytochrome b family. The main subunits of complex b-c1 are: cytochrome b, cytochrome c1 and the Rieske protein. Requires heme b as cofactor.

It is found in the mitochondrion inner membrane. Component of the ubiquinol-cytochrome c reductase complex (complex III or cytochrome b-c1 complex) that is part of the mitochondrial respiratory chain. The b-c1 complex mediates electron transfer from ubiquinol to cytochrome c. Contributes to the generation of a proton gradient across the mitochondrial membrane that is then used for ATP synthesis. This chain is Cytochrome b (MT-CYB), found in Acanthamoeba castellanii (Amoeba).